The following is a 52-amino-acid chain: DNA-directed RNA polymerase subunit Rpo12 (52 aa).

Zn(2+) is bound by residues Cys13, Cys30, and Cys33.

It belongs to the archaeal Rpo12/eukaryotic RPC10 RNA polymerase subunit family. In terms of assembly, part of the RNA polymerase complex. It depends on Zn(2+) as a cofactor.

It is found in the cytoplasm. The enzyme catalyses RNA(n) + a ribonucleoside 5'-triphosphate = RNA(n+1) + diphosphate. In terms of biological role, DNA-dependent RNA polymerase (RNAP) catalyzes the transcription of DNA into RNA using the four ribonucleoside triphosphates as substrates. This Pyrobaculum arsenaticum (strain DSM 13514 / JCM 11321 / PZ6) protein is DNA-directed RNA polymerase subunit Rpo12.